A 258-amino-acid chain; its full sequence is Pimeloyl-[acyl-carrier protein] methyl ester esterase (258 aa).

The 227-residue stretch at 16–242 (LVLLHGWGLN…AAHAPFISHP (227 aa)) folds into the AB hydrolase-1 domain. Residues Trp22, 82 to 83 (SL), and 143 to 147 (FLALQ) each bind substrate. Ser82 serves as the catalytic Nucleophile. Active-site residues include Asp207 and His235. His235 is a substrate binding site.

This sequence belongs to the AB hydrolase superfamily. Carboxylesterase BioH family. Monomer.

It is found in the cytoplasm. The enzyme catalyses 6-carboxyhexanoyl-[ACP] methyl ester + H2O = 6-carboxyhexanoyl-[ACP] + methanol + H(+). It functions in the pathway cofactor biosynthesis; biotin biosynthesis. In terms of biological role, the physiological role of BioH is to remove the methyl group introduced by BioC when the pimeloyl moiety is complete. It allows to synthesize pimeloyl-ACP via the fatty acid synthetic pathway through the hydrolysis of the ester bonds of pimeloyl-ACP esters. The sequence is that of Pimeloyl-[acyl-carrier protein] methyl ester esterase from Edwardsiella ictaluri (strain 93-146).